An 83-amino-acid polypeptide reads, in one-letter code: Cytochrome c oxidase subunit 12, mitochondrial (83 aa).

The CHCH domain occupies 24-67 (TKHCWQSYVDYHKCVNMKGEDFAPCKVFWKTYNALCPLDWIEKW). The short motif at 27–37 (CWQSYVDYHKC) is the Cx9C motif element. 2 disulfide bridges follow: cysteine 27-cysteine 59 and cysteine 37-cysteine 48. Positions 48-59 (CKVFWKTYNALC) match the Cx10C motif motif. At serine 82 the chain carries Phosphoserine.

Belongs to the cytochrome c oxidase subunit 6B family. Component of the cytochrome c oxidase (complex IV, CIV), a multisubunit enzyme composed of 12 subunits. The complex is composed of a catalytic core of 3 subunits COX1, COX2 and COX3, encoded in the mitochondrial DNA, and 9 supernumerary subunits COX4, COX5A (or COX5B), COX6, COX7, COX8, COX9, COX12, COX13 and COX26, which are encoded in the nuclear genome. The complex exists as a monomer or a dimer and forms supercomplexes (SCs) in the inner mitochondrial membrane with a dimer of ubiquinol-cytochrome c oxidoreductase (cytochrome b-c1 complex, complex III, CIII), resulting in 2 different assemblies (supercomplexes III(2)IV and III(2)IV(2)).

The protein resides in the mitochondrion inner membrane. The protein operates within energy metabolism; oxidative phosphorylation. Functionally, component of the cytochrome c oxidase, the last enzyme in the mitochondrial electron transport chain which drives oxidative phosphorylation. The respiratory chain contains 3 multisubunit complexes succinate dehydrogenase (complex II, CII), ubiquinol-cytochrome c oxidoreductase (cytochrome b-c1 complex, complex III, CIII) and cytochrome c oxidase (complex IV, CIV), that cooperate to transfer electrons derived from NADH and succinate to molecular oxygen, creating an electrochemical gradient over the inner membrane that drives transmembrane transport and the ATP synthase. Cytochrome c oxidase is the component of the respiratory chain that catalyzes the reduction of oxygen to water. Electrons originating from reduced cytochrome c in the intermembrane space (IMS) are transferred via the dinuclear copper A center (CU(A)) of COX2 and heme A of COX1 to the active site in COX1, a binuclear center (BNC) formed by heme A3 and copper B (CU(B)). The BNC reduces molecular oxygen to 2 water molecules unsing 4 electrons from cytochrome c in the IMS and 4 protons from the mitochondrial matrix. This chain is Cytochrome c oxidase subunit 12, mitochondrial (COX12), found in Saccharomyces cerevisiae (strain ATCC 204508 / S288c) (Baker's yeast).